The sequence spans 317 residues: U5 small nuclear ribonucleoprotein TSSC4 (317 aa).

The span at 1–19 (MAETEAGLEVEEPTEDDTL) shows a compositional bias: acidic residues. The segment at 1–78 (MAETEAGLEV…IPTTAVQPFH (78 aa)) is disordered. Residues 20–37 (PSDTVSLSDSDSDLSLPS) are compositionally biased toward low complexity. Ser-57, Ser-64, Ser-83, and Ser-92 each carry phosphoserine. The segment at 74–101 (VQPFHLRGMSSTFSQRSHSIFDCLESAA) is hom2; mediates interaction with the U5 snRNP complexes and required for spliceosomal tri-snRNP complex assembly. Residues 123–151 (VAPPSQTPARSLSRVHGNTDPTRVHPVPD) form a disordered region. The interaction with SNRNP200 stretch occupies residues 146 to 300 (VHPVPDYVSH…SKKRSRDHFR (155 aa)). The hom3; mediates interaction with the U5 snRNP complexes stretch occupies residues 147–183 (HPVPDYVSHPERWTKYSLEDVSETSEQSNRDAALAFL). Residues 198 to 238 (FNQDPSSCGEGRVVFTKPVRGSEARAERKRVLKKGVVSGAG) are hom4; necessary for interaction with the PRPF19 complex and required for spliceosomal tri-snRNP complex assembly. Position 214 is an N6-acetyllysine (Lys-214). Residues 247–317 (HLAGPEAEEW…GPGSERGPSV (71 aa)) are disordered.

It belongs to the TSSC4 family. In terms of assembly, interacts in a RNA-independent manner with distinct U5 snRNP-containing complexes, the mono-U5 snRNP and the post-splicing U5 snRNP-PRPF19 complex. Interacts with SNRNP200; the interaction is direct, excludes recruitment of C9ORF78 and WBP4 to SNRNP200 and negatively regulates its RNA helicase activity. Interacts with PRPF8; the interaction is direct.

Its subcellular location is the nucleus. The protein resides in the cytoplasm. Its function is as follows. Protein associated with the U5 snRNP, during its maturation and its post-splicing recycling and which is required for spliceosomal tri-snRNP complex assembly in the nucleus. Has a molecular sequestering activity and transiently hinders SNRNP200 binding sites for constitutive splicing factors that intervene later during the assembly of the spliceosome and splicing. Together with its molecular sequestering activity, may also function as a molecular adapter and placeholder, coordinating the assembly of the U5 snRNP and its association with the U4/U6 di-snRNP. In Rattus norvegicus (Rat), this protein is U5 small nuclear ribonucleoprotein TSSC4.